Here is a 430-residue protein sequence, read N- to C-terminus: MAVFPLSAKHRKYALRALAVSIILVSAAYIASTERTERVRPQRVEQNLPPLSWGGSGVQTAYWVQEAVQPGDSLADVLARSGMARDEIARITEKYGGEADLRHLRADQSVHVLVGGDGGAREVQFFTDEDGERNLVALEKKGGIWRRSASEADMKVLPTLRSVVVKTSARGSLARAEVPVEIRESLSGIFAGRFSLDGLKEGDAVRLMYDSLYFHGQQVAAGDILAAEVVKGGTRHQAFYYRSDKEGGGGGNYYDEDGKVLQEKGGFNIEPLVYTRISSPFGYRMHPILHTWRLHTGIDYAAPQGTPVRASADGVITFKGRKGGYGNAVMIRHANGVETLYAHLSAFSQAEGNVRGGEVIGFVGSTGRSTGPHLHYEARINGQPVNPVSVALPTPELTQADKAAFAAQKQKADALLARLRGIPVTVSQSD.

The Zn(2+) site is built by His-295, Asp-299, and His-375.

This sequence belongs to the peptidase M23B family. In terms of assembly, monomer. Requires Zn(2+) as cofactor. Post-translationally, likely to be synthesized as a proenzyme. The cleavage of the N-terminal domain is probably required for the activation of the enzyme.

Its subcellular location is the cell outer membrane. In terms of biological role, has both endopeptidase and DD-carboxypeptidase activities. Degrades cell wall peptidoglycan (PG) to allow consummate expression of pili. The protein is DD-carboxypeptidase/endopeptidase Mpg of Neisseria meningitidis serogroup B (strain ATCC BAA-335 / MC58).